Reading from the N-terminus, the 467-residue chain is Amino-acid permease RocE (467 aa).

The next 12 helical transmembrane spans lie at 21 to 41, 47 to 67, 87 to 107, 122 to 142, 162 to 182, 207 to 227, 246 to 266, 283 to 303, 336 to 356, 361 to 381, 409 to 429, and 435 to 455; these read FMIS…GFTI, LGAV…MLCL, FISP…WAVT, WFPH…MFIL, ILII…LIDL, MLIT…IGVA, VWRT…MIPW, IGIP…LLSV, VPMY…LTKF, TVYM…WITI, YPVL…SLAF, and IALY…HVVI.

The protein belongs to the amino acid-polyamine-organocation (APC) superfamily. Amino acid transporter (AAT) (TC 2.A.3.1) family.

The protein resides in the cell membrane. In terms of biological role, putative transport protein involved in arginine degradative pathway. Probably transports arginine or ornithine. The polypeptide is Amino-acid permease RocE (Bacillus subtilis (strain 168)).